We begin with the raw amino-acid sequence, 158 residues long: Transcriptional repressor NrdR (158 aa).

A zinc finger lies at 3-34 (CPSCQNTDSRVLESRAAEGGRSVRRRRECLNC). The region spanning 49–139 (ITVIKRNGHR…VYRHFRSVSD (91 aa)) is the ATP-cone domain.

The protein belongs to the NrdR family. Zn(2+) serves as cofactor.

In terms of biological role, negatively regulates transcription of bacterial ribonucleotide reductase nrd genes and operons by binding to NrdR-boxes. The sequence is that of Transcriptional repressor NrdR from Synechococcus sp. (strain CC9311).